The following is a 203-amino-acid chain: Large ribosomal subunit protein bL25 (203 aa).

It belongs to the bacterial ribosomal protein bL25 family. CTC subfamily. In terms of assembly, part of the 50S ribosomal subunit; part of the 5S rRNA/L5/L18/L25 subcomplex. Contacts the 5S rRNA. Binds to the 5S rRNA independently of L5 and L18.

In terms of biological role, this is one of the proteins that binds to the 5S RNA in the ribosome where it forms part of the central protuberance. The sequence is that of Large ribosomal subunit protein bL25 from Dechloromonas aromatica (strain RCB).